Reading from the N-terminus, the 102-residue chain is Large ribosomal subunit protein bL21 (102 aa).

The protein belongs to the bacterial ribosomal protein bL21 family. Part of the 50S ribosomal subunit. Contacts protein L20.

This protein binds to 23S rRNA in the presence of protein L20. The protein is Large ribosomal subunit protein bL21 of Campylobacter lari (strain RM2100 / D67 / ATCC BAA-1060).